A 527-amino-acid polypeptide reads, in one-letter code: GMP synthase [glutamine-hydrolyzing] (527 aa).

Residues 11–209 enclose the Glutamine amidotransferase type-1 domain; it reads RILILDFGSQ…VLNICGCENL (199 aa). C88 acts as the Nucleophile in catalysis. Active-site residues include H183 and E185. One can recognise a GMPS ATP-PPase domain in the interval 210–402; the sequence is WTSANIIEDA…LGLPYNMLYR (193 aa). ATP is bound at residue 237–243; the sequence is SGGVDSS.

Homodimer.

It catalyses the reaction XMP + L-glutamine + ATP + H2O = GMP + L-glutamate + AMP + diphosphate + 2 H(+). The protein operates within purine metabolism; GMP biosynthesis; GMP from XMP (L-Gln route): step 1/1. Its function is as follows. Catalyzes the synthesis of GMP from XMP. The protein is GMP synthase [glutamine-hydrolyzing] of Photobacterium profundum (strain SS9).